Here is a 518-residue protein sequence, read N- to C-terminus: Bifunctional enzyme NanE/NanK (518 aa).

The tract at residues 1–234 is manNAc-6-P epimerase; the sequence is MCRVQGMIEE…DAVESAAKPS (234 aa). Positions 235–518 are manNAc kinase; that stretch reads SPVLAFDIGG…VADLAATYFS (284 aa). Residues 239–246 and 365–372 each bind ATP; these read AFDIGGTK and GIGGGIVL.

It in the N-terminal section; belongs to the NanE family. The protein in the C-terminal section; belongs to the ROK (NagC/XylR) family. NanK subfamily.

The catalysed reaction is an N-acyl-D-glucosamine 6-phosphate = an N-acyl-D-mannosamine 6-phosphate. It catalyses the reaction an N-acyl-D-mannosamine + ATP = an N-acyl-D-mannosamine 6-phosphate + ADP + H(+). Its pathway is amino-sugar metabolism; N-acetylneuraminate degradation; D-fructose 6-phosphate from N-acetylneuraminate: step 2/5. It functions in the pathway amino-sugar metabolism; N-acetylneuraminate degradation; D-fructose 6-phosphate from N-acetylneuraminate: step 3/5. Converts N-acetylmannosamine-6-phosphate (ManNAc-6-P) to N-acetylglucosamine-6-phosphate (GlcNAc-6-P). Its function is as follows. Catalyzes the phosphorylation of N-acetylmannosamine (ManNAc) to ManNAc-6-P. The sequence is that of Bifunctional enzyme NanE/NanK (nanEK) from Brucella melitensis biotype 1 (strain ATCC 23456 / CCUG 17765 / NCTC 10094 / 16M).